Reading from the N-terminus, the 455-residue chain is Homogentisate 1,2-dioxygenase (455 aa).

Histidine 308 serves as the catalytic Proton acceptor. 2 residues coordinate Fe cation: histidine 351 and glutamate 357. The homogentisate site is built by tyrosine 366 and histidine 387. Histidine 387 lines the Fe cation pocket.

It belongs to the homogentisate dioxygenase family. In terms of assembly, hexamer; dimer of trimers. Fe cation is required as a cofactor.

The catalysed reaction is homogentisate + O2 = 4-maleylacetoacetate + H(+). It participates in amino-acid degradation; L-phenylalanine degradation; acetoacetate and fumarate from L-phenylalanine: step 4/6. In terms of biological role, involved in the catabolism of homogentisate (2,5-dihydroxyphenylacetate or 2,5-OH-PhAc), a central intermediate in the degradation of phenylalanine and tyrosine. Catalyzes the oxidative ring cleavage of the aromatic ring of homogentisate to yield maleylacetoacetate. This Xanthomonas campestris pv. campestris (strain 8004) protein is Homogentisate 1,2-dioxygenase.